The chain runs to 477 residues: Protein translocase subunit SecY (477 aa).

The next 10 membrane-spanning stretches (helical) occupy residues 28–48 (FMIS…LAII), 67–89 (FFSL…AVGI), 130–150 (IITL…ATNS), 165–185 (DFVA…VFLG), 196–216 (GITL…FIAA), 234–254 (AISF…TTFI), 286–306 (SAGV…VTIA), 329–349 (GIVL…YIQI), 387–407 (FIGA…SALI), and 413–433 (LSLG…FMSA).

This sequence belongs to the SecY/SEC61-alpha family. Component of the Sec protein translocase complex. Heterotrimer consisting of SecY, SecE and SecG subunits. The heterotrimers can form oligomers, although 1 heterotrimer is thought to be able to translocate proteins. Interacts with the ribosome. Interacts with SecDF, and other proteins may be involved. Interacts with SecA.

The protein resides in the cell membrane. In terms of biological role, the central subunit of the protein translocation channel SecYEG. Consists of two halves formed by TMs 1-5 and 6-10. These two domains form a lateral gate at the front which open onto the bilayer between TMs 2 and 7, and are clamped together by SecE at the back. The channel is closed by both a pore ring composed of hydrophobic SecY resides and a short helix (helix 2A) on the extracellular side of the membrane which forms a plug. The plug probably moves laterally to allow the channel to open. The ring and the pore may move independently. This chain is Protein translocase subunit SecY, found in Mycoplasma pneumoniae (strain ATCC 29342 / M129 / Subtype 1) (Mycoplasmoides pneumoniae).